The primary structure comprises 238 residues: Orotidine 5'-phosphate decarboxylase (238 aa).

Substrate-binding positions include D11, K32, 59 to 68 (DLKFHDIPNT), T123, R185, Q194, G214, and R215. K61 acts as the Proton donor in catalysis.

The protein belongs to the OMP decarboxylase family. Type 1 subfamily. Homodimer.

The catalysed reaction is orotidine 5'-phosphate + H(+) = UMP + CO2. It functions in the pathway pyrimidine metabolism; UMP biosynthesis via de novo pathway; UMP from orotate: step 2/2. Its function is as follows. Catalyzes the decarboxylation of orotidine 5'-monophosphate (OMP) to uridine 5'-monophosphate (UMP). In Nostoc sp. (strain PCC 7120 / SAG 25.82 / UTEX 2576), this protein is Orotidine 5'-phosphate decarboxylase.